A 581-amino-acid chain; its full sequence is 2-succinyl-5-enolpyruvyl-6-hydroxy-3-cyclohexene-1-carboxylate synthase (581 aa).

Belongs to the TPP enzyme family. MenD subfamily. In terms of assembly, homodimer. Requires Mg(2+) as cofactor. It depends on Mn(2+) as a cofactor. The cofactor is thiamine diphosphate.

The catalysed reaction is isochorismate + 2-oxoglutarate + H(+) = 5-enolpyruvoyl-6-hydroxy-2-succinyl-cyclohex-3-ene-1-carboxylate + CO2. It participates in quinol/quinone metabolism; 1,4-dihydroxy-2-naphthoate biosynthesis; 1,4-dihydroxy-2-naphthoate from chorismate: step 2/7. It functions in the pathway cofactor biosynthesis; phylloquinone biosynthesis. In terms of biological role, catalyzes the thiamine diphosphate-dependent decarboxylation of 2-oxoglutarate and the subsequent addition of the resulting succinic semialdehyde-thiamine pyrophosphate anion to isochorismate to yield 2-succinyl-5-enolpyruvyl-6-hydroxy-3-cyclohexene-1-carboxylate (SEPHCHC). This chain is 2-succinyl-5-enolpyruvyl-6-hydroxy-3-cyclohexene-1-carboxylate synthase, found in Gloeothece citriformis (strain PCC 7424) (Cyanothece sp. (strain PCC 7424)).